The primary structure comprises 200 residues: 3-isopropylmalate dehydratase small subunit (200 aa).

Belongs to the LeuD family. LeuD type 1 subfamily. As to quaternary structure, heterodimer of LeuC and LeuD.

It catalyses the reaction (2R,3S)-3-isopropylmalate = (2S)-2-isopropylmalate. It participates in amino-acid biosynthesis; L-leucine biosynthesis; L-leucine from 3-methyl-2-oxobutanoate: step 2/4. Functionally, catalyzes the isomerization between 2-isopropylmalate and 3-isopropylmalate, via the formation of 2-isopropylmaleate. The chain is 3-isopropylmalate dehydratase small subunit from Arthrobacter sp. (strain FB24).